We begin with the raw amino-acid sequence, 283 residues long: Formamidopyrimidine-DNA glycosylase (283 aa).

Pro2 serves as the catalytic Schiff-base intermediate with DNA. The active-site Proton donor is the Glu3. The Proton donor; for beta-elimination activity role is filled by Lys61. Positions 94, 113, and 159 each coordinate DNA. An FPG-type zinc finger spans residues 245–279; sequence DAYGREGESCRRCGAVMRREKFMNRSSFYCPKCQP. The active-site Proton donor; for delta-elimination activity is Arg269.

The protein belongs to the FPG family. As to quaternary structure, monomer. The cofactor is Zn(2+).

It catalyses the reaction Hydrolysis of DNA containing ring-opened 7-methylguanine residues, releasing 2,6-diamino-4-hydroxy-5-(N-methyl)formamidopyrimidine.. The enzyme catalyses 2'-deoxyribonucleotide-(2'-deoxyribose 5'-phosphate)-2'-deoxyribonucleotide-DNA = a 3'-end 2'-deoxyribonucleotide-(2,3-dehydro-2,3-deoxyribose 5'-phosphate)-DNA + a 5'-end 5'-phospho-2'-deoxyribonucleoside-DNA + H(+). In terms of biological role, involved in base excision repair of DNA damaged by oxidation or by mutagenic agents. Acts as a DNA glycosylase that recognizes and removes damaged bases. Has a preference for oxidized purines, such as 7,8-dihydro-8-oxoguanine (8-oxoG). Has AP (apurinic/apyrimidinic) lyase activity and introduces nicks in the DNA strand. Cleaves the DNA backbone by beta-delta elimination to generate a single-strand break at the site of the removed base with both 3'- and 5'-phosphates. This is Formamidopyrimidine-DNA glycosylase from Mycobacterium avium (strain 104).